A 1537-amino-acid chain; its full sequence is Adhesion G protein-coupled receptor L3 (1537 aa).

Positions 1 to 19 (MWPPQLLILTMLLAPVVHG) are cleaved as a signal peptide. The Extracellular portion of the chain corresponds to 20 to 943 (GKHNERHPAL…VKHSDAVHDL (924 aa)). The tract at residues 53-80 (PAAERSTAHRGQGPRGAARGVRGPGAPG) is disordered. The SUEL-type lectin domain occupies 103 to 192 (SCESYPIELR…KYLEVQYECV (90 aa)). Cystine bridges form between C104/C134, C113/C191, C146/C178, C159/C165, and C203/C385. Residue N161 is glycosylated (N-linked (GlcNAc...) asparagine). The Olfactomedin-like domain maps to 202–461 (LCPGLLKGVY…VVKYSLDFGP (260 aa)). An interaction with FLRT3 region spans residues 317–347 (YHDTSPYRWGGKSDIDLAVDENGLWVIYATE). Ca(2+)-binding residues include D332, N380, A381, and V435. Residues 521–540 (RSTTASLPGRRNRSTSTPSP) form a disordered region. Residues N532, N617, N827, N840, N885, and N911 are each glycosylated (N-linked (GlcNAc...) asparagine). The GAIN-B domain occupies 756–935 (DIVRENTDNI…AVLMAHVEVK (180 aa)). 2 disulfides stabilise this stretch: C886–C917 and C905–C919. A GPS region spans residues 886 to 935 (CSFWSYSKRTMTGYWSTQGCRLLTTNKTHTTCSCNHLTNFAVLMAHVEVK). Residues 923-939 (TNFAVLMAHVEVKHSDA) are stachel. Residues 944-969 (LLDVITWVGILLSLVCLLICIFTFCF) form a helical membrane-spanning segment. Residues 970–975 (FRGLQS) are Cytoplasmic-facing. Residues 976–999 (DRNTIHKNLCISLFVAELLFLIGI) form a helical membrane-spanning segment. N-linked (GlcNAc...) asparagine glycosylation occurs at N1000. Topologically, residues 1000-1006 (NRTDQPI) are extracellular. The chain crosses the membrane as a helical span at residues 1007–1034 (ACAVFAALLHFFFLAAFTWMFLEGVQLY). Residues C1008 and C1080 are joined by a disulfide bond. The Cytoplasmic portion of the chain corresponds to 1035-1048 (IMLVEVFESEHSRR). Residues 1049–1071 (KYFYLVGYGMPALIVAVSAAVDY) traverse the membrane as a helical segment. The Extracellular segment spans residues 1072 to 1086 (RSYGTDKVCWLRLDT). The chain crosses the membrane as a helical span at residues 1087-1112 (YFIWSFIGPATLIIMLNVIFLGIALY). Over 1113 to 1142 (KMFHHTAILKPESGCLDNINYEDNRPFIKS) the chain is Cytoplasmic. Residues 1143-1163 (WVIGAIALLCLLGLTWAFGLM) form a helical membrane-spanning segment. Residues 1164–1168 (YINES) lie on the Extracellular side of the membrane. N1166 carries an N-linked (GlcNAc...) asparagine glycan. The chain crosses the membrane as a helical span at residues 1169-1195 (TVIMAYLFTIFNSLQGMFIFIFHCVLQ). Topologically, residues 1196 to 1537 (KKVRKEYGKC…KGPAHLVTSL (342 aa)) are cytoplasmic. The disordered stretch occupies residues 1213–1237 (GKSTESSIGSGKTSGSRTPGRYSTG). Phosphoserine occurs at positions 1254 and 1522. The tract at residues 1512 to 1537 (FIVPPNKDGASPEGTSKGPAHLVTSL) is disordered. The short motif at 1532–1537 (HLVTSL) is the PDZ-binding element.

This sequence belongs to the G-protein coupled receptor 2 family. LN-TM7 subfamily. Heterodimer of 2 chains generated by proteolytic processing; the large extracellular N-terminal fragment and the membrane-bound C-terminal fragment predominantly remain associated and non-covalently linked. Interacts (via olfactomedin-like domain) with FLRT1 (via extracellular domain). Interacts (via olfactomedin-like domain) with FLRT2 (via extracellular domain). Interacts (via olfactomedin-like domain) with FLRT3 (via extracellular domain); the interaction is direct. Interacts (via extracellular domain) with TENM1. Interacts (via extracellular domain) with TENM2. Interacts (via extracellular domain) with TENM3. Identified in a complex with FLRT3 and UNC5B; does not interact with UNC5B by itself. Identified in a complex with FLRT3 and UNC5D; does not interact with UNC5D by itself. As to quaternary structure, interacts (via PDZ-binding motif) with SHANK3. Interacts (via PDZ-binding motif) with DLG4. Autoproteolytically processed at the GPS region of the GAIN-B domain; this cleavage modulates receptor activity. In terms of processing, O-glycosylated (major) and N-glycosylated. Localizes to postsynaptic spines in non-overlapping dendritic domains of CA1-region pyramidal neurons: specifically localizes to excitatory synapses in the S.oriens and S.radiatum, corresponding to distinct presynaptic inputs onto CA1-region pyramidal neurons.

It localises to the cell membrane. The protein localises to the postsynaptic cell membrane. It is found in the cell projection. Its subcellular location is the axon. The protein resides in the cell junction. With respect to regulation, forms a heterodimer of 2 chains generated by proteolytic processing that remain associated through non-covalent interactions mediated by the GAIN-B domain. In the inactivated receptor, the Stachel sequence (also named stalk) is embedded in the GAIN-B domain, where it adopts a beta-strand conformation. On activation, the Stachel moves into the 7 transmembrane region and adopts a twisted hook-shaped configuration that forms contacts within the receptor, leading to coupling of a G-alpha protein, which activates signaling. The cleaved GAIN-B and N-terminal domains can then dissociate from the rest of the receptor. Functionally, orphan adhesion G-protein coupled receptor (aGPCR), which mediates synapse specificity. Ligand binding causes a conformation change that triggers signaling via guanine nucleotide-binding proteins (G proteins) and modulates the activity of downstream effectors. ADGRL3 is coupled with different classes of G alpha proteins, such as G(12)/G(13), G(s), G(i) or G(q), depending on the context. Coupling to G(12)/G(13) G proteins, which mediates the activation Rho small GTPases is the most efficient. Following G-protein coupled receptor activation, associates with cell adhesion molecules that are expressed at the surface of adjacent cells to direct synapse specificity. Specifically mediates the establishment of Schaffer-collateral synapses formed by CA3-region axons on CA1-region pyramidal neurons in the hippocampus. Localizes to postsynaptic spines in excitatory synapses in the S.oriens and S.radiatum and interacts with presynaptic cell adhesion molecules FLRT3 and TENM2, promoting synapse formation. Plays a role in the development of glutamatergic synapses in the cortex. Important in determining the connectivity rates between the principal neurons in the cortex. Orphan adhesion G-protein coupled receptor (aGPCR), which mediates synapse specificity. Ligand binding causes a conformation change that triggers signaling via guanine nucleotide-binding proteins (G proteins) and modulates the activity of downstream effectors, such as adenylate cyclase. Isoform 1 is specifically coupled to G(s) G proteins and mediates activation of adenylate cyclase activity. Following G-protein coupled receptor activation, undergoes liquid-liquid phase transition, associates with (1) cell adhesion molecules that are expressed at the surface of adjacent cells, as well as (2) PDZ-containing proteins, such as SHANK3 and DLG4, in the cytoplasm to direct synapse formation. In terms of biological role, orphan adhesion G-protein coupled receptor (aGPCR). Ligand binding causes a conformation change that triggers signaling via guanine nucleotide-binding proteins (G proteins) and modulates the activity of downstream effectors, such as RhoA pathway. Isoform 7 is coupled to G(12) and/or G(13) G proteins (GNA12 and GNA13, respectively) and mediates the activation Rho small GTPases. This is Adhesion G protein-coupled receptor L3 from Mus musculus (Mouse).